The chain runs to 585 residues: Tyramine beta-hydroxylase (585 aa).

A signal peptide spans 1-21 (MKCANAAALLFFVLCDIGVHG). The region spanning 31 to 142 (SNVTVKWQTD…GTTQFYIAAS (112 aa)) is the DOMON domain. Asn32 and Asn71 each carry an N-linked (GlcNAc...) asparagine glycan. Tyr206 is a catalytic residue. 2 cysteine pairs are disulfide-bonded: Cys208–Cys258 and Cys247–Cys270. 2 residues coordinate Cu(2+): His240 and His241. The Cu(2+) site is built by His308, His386, and His388. Cystine bridges form between Cys365-Cys477, Cys369-Cys534, and Cys440-Cys462. The active site involves His386. The N-linked (GlcNAc...) asparagine glycan is linked to Asn449. Cu(2+) is bound at residue Met461. Residue Asn483 is glycosylated (N-linked (GlcNAc...) asparagine).

The protein belongs to the copper type II ascorbate-dependent monooxygenase family. The cofactor is Cu(2+).

It is found in the cytoplasmic vesicle. The protein resides in the secretory vesicle. The protein localises to the synaptic vesicle. The catalysed reaction is tyramine + L-ascorbate + O2 = (R)-octopamine + L-dehydroascorbate + H2O. In terms of biological role, catalyzes the hydroxylation of tyramine into octopamine, a neurotransmitter involved in pharyngeal pumping and egg laying. The sequence is that of Tyramine beta-hydroxylase (tbh-1) from Caenorhabditis briggsae.